The following is a 297-amino-acid chain: Pyridoxal 5'-phosphate synthase subunit PdxS (297 aa).

Asp-27 contributes to the D-ribose 5-phosphate binding site. The active-site Schiff-base intermediate with D-ribose 5-phosphate is Lys-84. Residue Gly-156 coordinates D-ribose 5-phosphate. Arg-168 contributes to the D-glyceraldehyde 3-phosphate binding site. D-ribose 5-phosphate is bound by residues Gly-217 and 238 to 239; that span reads GS.

This sequence belongs to the PdxS/SNZ family. In the presence of PdxT, forms a dodecamer of heterodimers.

It catalyses the reaction aldehydo-D-ribose 5-phosphate + D-glyceraldehyde 3-phosphate + L-glutamine = pyridoxal 5'-phosphate + L-glutamate + phosphate + 3 H2O + H(+). It participates in cofactor biosynthesis; pyridoxal 5'-phosphate biosynthesis. Its function is as follows. Catalyzes the formation of pyridoxal 5'-phosphate from ribose 5-phosphate (RBP), glyceraldehyde 3-phosphate (G3P) and ammonia. The ammonia is provided by the PdxT subunit. Can also use ribulose 5-phosphate and dihydroxyacetone phosphate as substrates, resulting from enzyme-catalyzed isomerization of RBP and G3P, respectively. In Corynebacterium efficiens (strain DSM 44549 / YS-314 / AJ 12310 / JCM 11189 / NBRC 100395), this protein is Pyridoxal 5'-phosphate synthase subunit PdxS.